A 466-amino-acid chain; its full sequence is Soluble pyridine nucleotide transhydrogenase (466 aa).

An FAD-binding site is contributed by 36-45; it reads ERYHNVGGGC.

It belongs to the class-I pyridine nucleotide-disulfide oxidoreductase family. It depends on FAD as a cofactor.

Its subcellular location is the cytoplasm. The catalysed reaction is NAD(+) + NADPH = NADH + NADP(+). Conversion of NADPH, generated by peripheral catabolic pathways, to NADH, which can enter the respiratory chain for energy generation. The sequence is that of Soluble pyridine nucleotide transhydrogenase from Citrobacter koseri (strain ATCC BAA-895 / CDC 4225-83 / SGSC4696).